A 422-amino-acid chain; its full sequence is Probable isoprenylcysteine alpha-carbonyl methylesterase ICMEL2 (422 aa).

Over residues 1–16 the composition is skewed to basic and acidic residues; it reads MQLSPERCRPMSENRE. The disordered stretch occupies residues 1–55; it reads MQLSPERCRPMSENREAWSANSEEMELLHGSNRLSSPEHVRRRVSGNSSEDGSPR. 2 helical membrane-spanning segments follow: residues 97 to 117 and 152 to 172; these read LLALACYAMLLMPGFLQVAYL and VVVFVTGGAWIIGYKAWGSLL. Residues 158-160 and 229-231 each bind substrate; these read GGA and QSA. Residues S230, D331, and H363 contribute to the active site.

Belongs to the AB hydrolase superfamily. Isoprenylcysteine methylesterase family. Expressed at low levels in flowers and siliques.

Its subcellular location is the endoplasmic reticulum membrane. It is found in the golgi apparatus membrane. The enzyme catalyses [protein]-C-terminal S-[(2E,6E)-farnesyl]-L-cysteine methyl ester + H2O = [protein]-C-terminal S-[(2E,6E)-farnesyl]-L-cysteine + methanol + H(+). Functionally, catalyzes the demethylation of isoprenylcysteine methylesters. May act as a negative regulator of ABA signaling. The protein is Probable isoprenylcysteine alpha-carbonyl methylesterase ICMEL2 of Arabidopsis thaliana (Mouse-ear cress).